Consider the following 909-residue polypeptide: Protein translocase subunit SecA (909 aa).

ATP is bound by residues Gln87, 105-109 (GEGKT), and Asp507. The segment at 857-909 (DTHSELAEEQPPVAENRENKQQPFVRKNEKVGRNDPCPCGSGKKYKQCHGKLN) is disordered. Positions 871 to 889 (ENRENKQQPFVRKNEKVGR) are enriched in basic and acidic residues. Residues Cys893, Cys895, Cys904, and His905 each contribute to the Zn(2+) site. Positions 899 to 909 (KKYKQCHGKLN) are enriched in basic residues.

Belongs to the SecA family. In terms of assembly, monomer and homodimer. Part of the essential Sec protein translocation apparatus which comprises SecA, SecYEG and auxiliary proteins SecDF-YajC and YidC. Zn(2+) is required as a cofactor.

The protein localises to the cell inner membrane. It localises to the cytoplasm. It catalyses the reaction ATP + H2O + cellular proteinSide 1 = ADP + phosphate + cellular proteinSide 2.. In terms of biological role, part of the Sec protein translocase complex. Interacts with the SecYEG preprotein conducting channel. Has a central role in coupling the hydrolysis of ATP to the transfer of proteins into and across the cell membrane, serving both as a receptor for the preprotein-SecB complex and as an ATP-driven molecular motor driving the stepwise translocation of polypeptide chains across the membrane. This chain is Protein translocase subunit SecA, found in Nitrosomonas europaea (strain ATCC 19718 / CIP 103999 / KCTC 2705 / NBRC 14298).